The primary structure comprises 319 residues: Ribonuclease Z (319 aa).

Residues His62, His64, Asp66, His67, His139, Asp209, and His268 each contribute to the Zn(2+) site. Residue Asp66 is the Proton acceptor of the active site.

This sequence belongs to the RNase Z family. Homodimer. Requires Zn(2+) as cofactor.

It carries out the reaction Endonucleolytic cleavage of RNA, removing extra 3' nucleotides from tRNA precursor, generating 3' termini of tRNAs. A 3'-hydroxy group is left at the tRNA terminus and a 5'-phosphoryl group is left at the trailer molecule.. Zinc phosphodiesterase, which displays some tRNA 3'-processing endonuclease activity. Probably involved in tRNA maturation, by removing a 3'-trailer from precursor tRNA. The chain is Ribonuclease Z from Pseudomonas putida (strain GB-1).